The primary structure comprises 92 residues: UPF0250 protein XF_1271 (92 aa).

It belongs to the UPF0250 family.

In Xylella fastidiosa (strain 9a5c), this protein is UPF0250 protein XF_1271.